A 321-amino-acid chain; its full sequence is Ferredoxin--NADP reductase (321 aa).

The FAD site is built by E33, Q41, Y46, V86, L119, D277, and S318.

Belongs to the ferredoxin--NADP reductase type 2 family. As to quaternary structure, homodimer. FAD serves as cofactor.

The enzyme catalyses 2 reduced [2Fe-2S]-[ferredoxin] + NADP(+) + H(+) = 2 oxidized [2Fe-2S]-[ferredoxin] + NADPH. The sequence is that of Ferredoxin--NADP reductase from Lactococcus lactis subsp. lactis (strain IL1403) (Streptococcus lactis).